The sequence spans 309 residues: Homoserine O-acetyltransferase (309 aa).

The Acyl-thioester intermediate role is filled by Cys142. Residues Lys163 and Ser192 each coordinate substrate. His235 functions as the Proton acceptor in the catalytic mechanism. Residue Glu237 is part of the active site. Arg249 serves as a coordination point for substrate.

This sequence belongs to the MetA family.

It is found in the cytoplasm. It carries out the reaction L-homoserine + acetyl-CoA = O-acetyl-L-homoserine + CoA. It participates in amino-acid biosynthesis; L-methionine biosynthesis via de novo pathway; O-acetyl-L-homoserine from L-homoserine: step 1/1. Transfers an acetyl group from acetyl-CoA to L-homoserine, forming acetyl-L-homoserine. The chain is Homoserine O-acetyltransferase from Allorhizobium ampelinum (strain ATCC BAA-846 / DSM 112012 / S4) (Agrobacterium vitis (strain S4)).